Here is a 528-residue protein sequence, read N- to C-terminus: Glucose-6-phosphate isomerase (528 aa).

Catalysis depends on Glu322, which acts as the Proton donor. Catalysis depends on residues His351 and Lys455.

Belongs to the GPI family.

The protein localises to the cytoplasm. The catalysed reaction is alpha-D-glucose 6-phosphate = beta-D-fructose 6-phosphate. Its pathway is carbohydrate biosynthesis; gluconeogenesis. It participates in carbohydrate degradation; glycolysis; D-glyceraldehyde 3-phosphate and glycerone phosphate from D-glucose: step 2/4. Functionally, catalyzes the reversible isomerization of glucose-6-phosphate to fructose-6-phosphate. This Trichormus variabilis (strain ATCC 29413 / PCC 7937) (Anabaena variabilis) protein is Glucose-6-phosphate isomerase.